Reading from the N-terminus, the 460-residue chain is Argininosuccinate lyase (460 aa).

It belongs to the lyase 1 family. Argininosuccinate lyase subfamily.

It localises to the cytoplasm. It catalyses the reaction 2-(N(omega)-L-arginino)succinate = fumarate + L-arginine. It participates in amino-acid biosynthesis; L-arginine biosynthesis; L-arginine from L-ornithine and carbamoyl phosphate: step 3/3. The polypeptide is Argininosuccinate lyase (Staphylococcus haemolyticus (strain JCSC1435)).